The chain runs to 160 residues: Cytochrome b6-f complex subunit 4 (160 aa).

The next 3 membrane-spanning stretches (helical) occupy residues 36 to 56, 95 to 115, and 131 to 151; these read LLYI…GLAV, LLGV…PFLE, and TVFL…ALPI.

Belongs to the cytochrome b family. PetD subfamily. In terms of assembly, the 4 large subunits of the cytochrome b6-f complex are cytochrome b6, subunit IV (17 kDa polypeptide, petD), cytochrome f and the Rieske protein, while the 4 small subunits are petG, petL, petM and petN. The complex functions as a dimer.

It localises to the plastid. The protein localises to the chloroplast thylakoid membrane. Component of the cytochrome b6-f complex, which mediates electron transfer between photosystem II (PSII) and photosystem I (PSI), cyclic electron flow around PSI, and state transitions. This chain is Cytochrome b6-f complex subunit 4, found in Chara vulgaris (Common stonewort).